We begin with the raw amino-acid sequence, 145 residues long: Endoribonuclease YbeY (145 aa).

Zn(2+) contacts are provided by H109, H113, and H119.

The protein belongs to the endoribonuclease YbeY family. It depends on Zn(2+) as a cofactor.

It localises to the cytoplasm. Single strand-specific metallo-endoribonuclease involved in late-stage 70S ribosome quality control and in maturation of the 3' terminus of the 16S rRNA. In Vesicomyosocius okutanii subsp. Calyptogena okutanii (strain HA), this protein is Endoribonuclease YbeY.